The chain runs to 154 residues: SsrA-binding protein (154 aa).

Belongs to the SmpB family.

The protein resides in the cytoplasm. Functionally, required for rescue of stalled ribosomes mediated by trans-translation. Binds to transfer-messenger RNA (tmRNA), required for stable association of tmRNA with ribosomes. tmRNA and SmpB together mimic tRNA shape, replacing the anticodon stem-loop with SmpB. tmRNA is encoded by the ssrA gene; the 2 termini fold to resemble tRNA(Ala) and it encodes a 'tag peptide', a short internal open reading frame. During trans-translation Ala-aminoacylated tmRNA acts like a tRNA, entering the A-site of stalled ribosomes, displacing the stalled mRNA. The ribosome then switches to translate the ORF on the tmRNA; the nascent peptide is terminated with the 'tag peptide' encoded by the tmRNA and targeted for degradation. The ribosome is freed to recommence translation, which seems to be the essential function of trans-translation. This is SsrA-binding protein from Gluconacetobacter diazotrophicus (strain ATCC 49037 / DSM 5601 / CCUG 37298 / CIP 103539 / LMG 7603 / PAl5).